The chain runs to 273 residues: Diaminopimelate epimerase (273 aa).

Asparagine 11 and asparagine 60 together coordinate substrate. Residue cysteine 69 is the Proton donor of the active site. Substrate-binding positions include 70 to 71, asparagine 181, and 199 to 200; these read GN and ER. The active-site Proton acceptor is the cysteine 209. 210 to 211 contacts substrate; it reads GT.

The protein belongs to the diaminopimelate epimerase family. As to quaternary structure, homodimer.

The protein localises to the cytoplasm. The catalysed reaction is (2S,6S)-2,6-diaminopimelate = meso-2,6-diaminopimelate. The protein operates within amino-acid biosynthesis; L-lysine biosynthesis via DAP pathway; DL-2,6-diaminopimelate from LL-2,6-diaminopimelate: step 1/1. Functionally, catalyzes the stereoinversion of LL-2,6-diaminopimelate (L,L-DAP) to meso-diaminopimelate (meso-DAP), a precursor of L-lysine and an essential component of the bacterial peptidoglycan. The sequence is that of Diaminopimelate epimerase from Helicobacter pylori (strain ATCC 700392 / 26695) (Campylobacter pylori).